A 451-amino-acid polypeptide reads, in one-letter code: Cobalamin reductase PduS (451 aa).

2 4Fe-4S ferredoxin-type domains span residues 255-284 (TVLS…HELS) and 300-330 (PQLL…MRIN). [4Fe-4S] cluster is bound by residues Cys-264, Cys-267, Cys-270, Cys-274, Cys-309, Cys-312, Cys-315, and Cys-320.

Belongs to the PduS cobalamin reductase family. In terms of assembly, monomeric when purified anaerobically, dimeric under aerobic conditions. Forms a complex with PduO. Interacts with PduT, probably via the N-terminus of PduS. The cofactor is [4Fe-4S] cluster. It depends on FMN as a cofactor.

Its subcellular location is the bacterial microcompartment. It functions in the pathway polyol metabolism; 1,2-propanediol degradation. Its function is as follows. A protein that aids in conversion of cob(III)alamin to cob(II)alamin and then to cob(I)alamin in the bacterial microcompartment (BMC) dedicated to 1,2-propanediol (1,2-PD) degradation. The latter step requires PduO. No free cob(I)alamin is released, suggesting a complex is formed with PduO that finishes conversion to adenosylcobalamin. PduS and PduO allow regeneration of the adenosylcobalamin cofactor within the BMC. Another study showed reduction of cob(II)alamin to cob(I)alamin in the absence of PduO. Both reactions require NADH. Cyanocobalamin (CN-Cbl) is not a substrate for the first reaction. Cobalamin reduction probably occurs spontaneously in the presence of free reduced flavin nucleotides, this protein may be involved in electron transfer for this reduction. In terms of biological role, the 1,2-PD-specific bacterial microcompartment (BMC) concentrates low levels of 1,2-PD catabolic enzymes, concentrates volatile reaction intermediates thus enhancing pathway flux and keeps the level of toxic, mutagenic propionaldehyde low. This is Cobalamin reductase PduS from Salmonella typhimurium (strain LT2 / SGSC1412 / ATCC 700720).